Reading from the N-terminus, the 91-residue chain is UPF0367 protein cce_2199 (91 aa).

The protein belongs to the UPF0367 family.

The protein is UPF0367 protein cce_2199 of Crocosphaera subtropica (strain ATCC 51142 / BH68) (Cyanothece sp. (strain ATCC 51142)).